Consider the following 393-residue polypeptide: Dual-specificity RNA methyltransferase RlmN (393 aa).

Residue Glu-114 is the Proton acceptor of the active site. Positions 120–359 constitute a Radical SAM core domain; the sequence is EDDRATLCVS…VIVRKTRGDD (240 aa). An intrachain disulfide couples Cys-127 to Cys-364. Positions 134, 138, and 141 each coordinate [4Fe-4S] cluster. Residues 188–189, Ser-220, 242–244, and Asn-321 each bind S-adenosyl-L-methionine; these read GE and SLH. The active-site S-methylcysteine intermediate is the Cys-364.

The protein belongs to the radical SAM superfamily. RlmN family. The cofactor is [4Fe-4S] cluster.

Its subcellular location is the cytoplasm. It catalyses the reaction adenosine(2503) in 23S rRNA + 2 reduced [2Fe-2S]-[ferredoxin] + 2 S-adenosyl-L-methionine = 2-methyladenosine(2503) in 23S rRNA + 5'-deoxyadenosine + L-methionine + 2 oxidized [2Fe-2S]-[ferredoxin] + S-adenosyl-L-homocysteine. The catalysed reaction is adenosine(37) in tRNA + 2 reduced [2Fe-2S]-[ferredoxin] + 2 S-adenosyl-L-methionine = 2-methyladenosine(37) in tRNA + 5'-deoxyadenosine + L-methionine + 2 oxidized [2Fe-2S]-[ferredoxin] + S-adenosyl-L-homocysteine. Specifically methylates position 2 of adenine 2503 in 23S rRNA and position 2 of adenine 37 in tRNAs. m2A2503 modification seems to play a crucial role in the proofreading step occurring at the peptidyl transferase center and thus would serve to optimize ribosomal fidelity. This Actinobacillus pleuropneumoniae serotype 3 (strain JL03) protein is Dual-specificity RNA methyltransferase RlmN.